The following is a 113-amino-acid chain: Ribonuclease P protein component (113 aa).

The protein belongs to the RnpA family. As to quaternary structure, consists of a catalytic RNA component (M1 or rnpB) and a protein subunit.

It carries out the reaction Endonucleolytic cleavage of RNA, removing 5'-extranucleotides from tRNA precursor.. In terms of biological role, RNaseP catalyzes the removal of the 5'-leader sequence from pre-tRNA to produce the mature 5'-terminus. It can also cleave other RNA substrates such as 4.5S RNA. The protein component plays an auxiliary but essential role in vivo by binding to the 5'-leader sequence and broadening the substrate specificity of the ribozyme. The chain is Ribonuclease P protein component from Ligilactobacillus salivarius (strain UCC118) (Lactobacillus salivarius).